Reading from the N-terminus, the 387-residue chain is Sulfopyruvate decarboxylase (387 aa).

It belongs to the TPP enzyme family. The cofactor is thiamine diphosphate.

The enzyme catalyses 3-sulfopyruvate + H(+) = sulfoacetaldehyde + CO2. It participates in cofactor biosynthesis; coenzyme M biosynthesis. Involved in the biosynthesis of the coenzyme M (2-mercaptoethanesulfonic acid). Catalyzes the decarboxylation of sulfopyruvate to sulfoacetaldehyde. Is not able to decarboxylate the analogous compounds 2-oxoglutarate or 2-oxosuberate. The chain is Sulfopyruvate decarboxylase from Methanosarcina acetivorans (strain ATCC 35395 / DSM 2834 / JCM 12185 / C2A).